The primary structure comprises 241 residues: Large ribosomal subunit protein uL1 (241 aa).

The protein belongs to the universal ribosomal protein uL1 family. Part of the 50S ribosomal subunit.

Functionally, binds directly to 23S rRNA. The L1 stalk is quite mobile in the ribosome, and is involved in E site tRNA release. Its function is as follows. Protein L1 is also a translational repressor protein, it controls the translation of the L11 operon by binding to its mRNA. This chain is Large ribosomal subunit protein uL1, found in Streptomyces avermitilis (strain ATCC 31267 / DSM 46492 / JCM 5070 / NBRC 14893 / NCIMB 12804 / NRRL 8165 / MA-4680).